A 707-amino-acid chain; its full sequence is MGRKQNENEAHGNSAKYDPSFRGPIKNRGCTDIICCVLFLIFILGYIIVGLVAWVYGDPRQVLYPRNSTGAYCGVGDNKDKPYVLYFDILSCAAAINIISIAENGLQCPTPQVCVSSCPLAPWAVEVFQFSKTVGEVYGERRNFCLPAVSPDMIVEESLQKGLCPRFLLPSTPALGRCFPLPNINFTLPEDLRINNTTVSNGISGLLDSINARDVSVKIFEDFAQSWYWILVALGVALALSLLFILLLRLVAAPLVLLLIVGVLAVLAYGIYHCWQQYQVFRDKGASITQLGFTTNFSAYQSVKETWLAALIVLAVLEGILLLMLIFLRQRIRIAIALLKEASRAVGQMMSTMFYPLVTFVLLVICIGYWAVTALYLATSGQPQYIYWASNTSTPGCENVPVNMTCDPMAPLNSSCPNLKCVFKGYSTTGLAQRSLFNLQIYGVLGLFWTVNWVLALGQCVLAGAFASFYWAFHKPRDIPTFPLSSAFIRTLRYHTGSLAFGALILSLVQIARVILEYIDHKLRGSQNPVARCIICCFKCCLWCLEKFIKFLNRNAYIMIAIYGKNFCVSAKNAFMLLMRNVLRVVVLDKVTDLLLFFGKLLVVGGVGVLSFFFFSGRIKGLGKDFENPNLNYYWLPIMTSIMGAYVIASGFFSVFGMCVDTLFLCFLEDLERNDGSQERPYYMPKALLKILGKKNEAPTGGKTRKK.

Topologically, residues 1–32 are cytoplasmic; it reads MGRKQNENEAHGNSAKYDPSFRGPIKNRGCTD. The helical transmembrane segment at 33-53 threads the bilayer; sequence IICCVLFLIFILGYIIVGLVA. Over 54–227 the chain is Extracellular; that stretch reads WVYGDPRQVL…KIFEDFAQSW (174 aa). 4 N-linked (GlcNAc...) asparagine glycosylation sites follow: N67, N185, N195, and N196. Residues 228–248 form a helical membrane-spanning segment; sequence YWILVALGVALALSLLFILLL. Topologically, residues 249 to 250 are cytoplasmic; it reads RL. Residues 251–271 traverse the membrane as a helical segment; sequence VAAPLVLLLIVGVLAVLAYGI. The Extracellular segment spans residues 272-307; that stretch reads YHCWQQYQVFRDKGASITQLGFTTNFSAYQSVKETW. N-linked (GlcNAc...) asparagine glycosylation is present at N296. A helical membrane pass occupies residues 308–328; that stretch reads LAALIVLAVLEGILLLMLIFL. At 329 to 356 the chain is on the cytoplasmic side; sequence RQRIRIAIALLKEASRAVGQMMSTMFYP. Residues 357-377 traverse the membrane as a helical segment; the sequence is LVTFVLLVICIGYWAVTALYL. The Extracellular segment spans residues 378–452; the sequence is ATSGQPQYIY…GVLGLFWTVN (75 aa). N391, N403, and N413 each carry an N-linked (GlcNAc...) asparagine glycan. The chain crosses the membrane as a helical span at residues 453 to 473; the sequence is WVLALGQCVLAGAFASFYWAF. Residues 474–498 are Cytoplasmic-facing; sequence HKPRDIPTFPLSSAFIRTLRYHTGS. Residues 499-519 form a helical membrane-spanning segment; it reads LAFGALILSLVQIARVILEYI. Residues 520-557 lie on the Extracellular side of the membrane; the sequence is DHKLRGSQNPVARCIICCFKCCLWCLEKFIKFLNRNAY. The chain crosses the membrane as a helical span at residues 558–578; sequence IMIAIYGKNFCVSAKNAFMLL. Topologically, residues 579–594 are cytoplasmic; that stretch reads MRNVLRVVVLDKVTDL. The helical transmembrane segment at 595–615 threads the bilayer; that stretch reads LLFFGKLLVVGGVGVLSFFFF. The Extracellular portion of the chain corresponds to 616–635; that stretch reads SGRIKGLGKDFENPNLNYYW. A helical membrane pass occupies residues 636–656; the sequence is LPIMTSIMGAYVIASGFFSVF. Residues 657 to 707 lie on the Cytoplasmic side of the membrane; it reads GMCVDTLFLCFLEDLERNDGSQERPYYMPKALLKILGKKNEAPTGGKTRKK.

This sequence belongs to the CTL (choline transporter-like) family. Post-translationally, N-glycosylated; N-glycosylation of Asn-67 and Asn-391 is required for a proper thiamine pyrophosphate uptake. Expressed in colon and cecum.

It localises to the membrane. It is found in the apical cell membrane. The catalysed reaction is choline(out) + n H(+)(in) = choline(in) + n H(+)(out). The enzyme catalyses thiamine diphosphate(out) = thiamine diphosphate(in). Functionally, choline transporter that plays a role in the choline-acetylcholine system and is required to the efferent innervation of hair cells in the olivocochlear bundle for the maintenance of physiological function of outer hair cells and the protection of hair cells from acoustic injury. Also described as a thiamine pyrophosphate transporter in colon, may mediate the absorption of microbiota-generated thiamine pyrophosphate and contribute to host thiamine (vitamin B1) homeostasis. This chain is Choline transporter-like protein 4, found in Mus musculus (Mouse).